The chain runs to 151 residues: Transcription antitermination protein NusB (151 aa).

It belongs to the NusB family.

Functionally, involved in transcription antitermination. Required for transcription of ribosomal RNA (rRNA) genes. Binds specifically to the boxA antiterminator sequence of the ribosomal RNA (rrn) operons. The polypeptide is Transcription antitermination protein NusB (Thermus thermophilus (strain ATCC BAA-163 / DSM 7039 / HB27)).